The following is a 256-amino-acid chain: Hemin import ATP-binding protein HmuV (256 aa).

Residues 2–238 form the ABC transporter domain; sequence ISAQNLVYSL…QALTMLYGAD (237 aa). 34–41 serves as a coordination point for ATP; sequence GPNGAGKS.

The protein belongs to the ABC transporter superfamily. Heme (hemin) importer (TC 3.A.1.14.5) family. In terms of assembly, the complex is composed of two ATP-binding proteins (HmuV), two transmembrane proteins (HmuU) and a solute-binding protein (HmuT).

The protein localises to the cell inner membrane. Part of the ABC transporter complex HmuTUV involved in hemin import. Responsible for energy coupling to the transport system. This chain is Hemin import ATP-binding protein HmuV, found in Shigella dysenteriae serotype 1 (strain Sd197).